A 422-amino-acid polypeptide reads, in one-letter code: Serine hydroxymethyltransferase (422 aa).

Residues Leu-118 and 122 to 124 each bind (6S)-5,6,7,8-tetrahydrofolate; that span reads GHL. The residue at position 227 (Lys-227) is an N6-(pyridoxal phosphate)lysine. Glu-242 lines the (6S)-5,6,7,8-tetrahydrofolate pocket.

Belongs to the SHMT family. As to quaternary structure, homodimer. Pyridoxal 5'-phosphate is required as a cofactor.

The protein resides in the cytoplasm. It carries out the reaction (6R)-5,10-methylene-5,6,7,8-tetrahydrofolate + glycine + H2O = (6S)-5,6,7,8-tetrahydrofolate + L-serine. The protein operates within one-carbon metabolism; tetrahydrofolate interconversion. It functions in the pathway amino-acid biosynthesis; glycine biosynthesis; glycine from L-serine: step 1/1. Catalyzes the reversible interconversion of serine and glycine with tetrahydrofolate (THF) serving as the one-carbon carrier. This reaction serves as the major source of one-carbon groups required for the biosynthesis of purines, thymidylate, methionine, and other important biomolecules. Also exhibits THF-independent aldolase activity toward beta-hydroxyamino acids, producing glycine and aldehydes, via a retro-aldol mechanism. In Sulfurihydrogenibium sp. (strain YO3AOP1), this protein is Serine hydroxymethyltransferase.